A 372-amino-acid polypeptide reads, in one-letter code: MLCFVRFQAGFVRIIVAARKRFRYFLMAAEDRSEELSSNVENGSCNSNEGINPETSSHWIENVVKVRKPYTVTKQREKWSEEEHDRFLEAIKLYGRGWRQIQEHIGTKTAVQIRSHAQKFFSKMAQEADSRSEGSVKAIVIPPPRPKRKPAHPYPRKSPVPYTQSPPPNLSAMEKGTKSPTSVLSSFGSEDQVNRCSSPNSCTSDIQSIGATSIDKKNNYTTSKQPFKDDSDIGSTPISSITLFGKIVLVAEESHKPSSYNDDDLKQMTCQENHYSGMLVDTNLSLGVWETFCTGSNAFGSVTEASENLEKSAEPISSSWKRLSSLEKQGSCNPVNASGFRPYKRCLSEREVTSSLTLVASDEKKSQRARIC.

An HTH myb-type domain is found at 71 to 125; sequence TVTKQREKWSEEEHDRFLEAIKLYGRGWRQIQEHIGTKTAVQIRSHAQKFFSKMA. A DNA-binding region (H-T-H motif) is located at residues 98–121; the sequence is WRQIQEHIGTKTAVQIRSHAQKFF. Residues 124–204 are disordered; sequence MAQEADSRSE…RCSSPNSCTS (81 aa). Residues 145-155 show a composition bias toward basic residues; sequence RPKRKPAHPYP. Pro residues predominate over residues 156–169; that stretch reads RKSPVPYTQSPPPN. Positions 178 to 204 are enriched in polar residues; that stretch reads KSPTSVLSSFGSEDQVNRCSSPNSCTS.

It localises to the nucleus. Transcription factor involved in phytochrome A-mediated cotyledon opening. Controlled by the central oscillator mediated by LHY and CCA1. Part of a regulatory circadian feedback loop. Regulates its own expression. The chain is Protein REVEILLE 7 (RVE7) from Arabidopsis thaliana (Mouse-ear cress).